The chain runs to 29 residues: Pyridoxal 5'-phosphate synthase subunit PdxS (29 aa).

The protein belongs to the PdxS/SNZ family. In the presence of PdxT, forms a dodecamer of heterodimers.

The enzyme catalyses aldehydo-D-ribose 5-phosphate + D-glyceraldehyde 3-phosphate + L-glutamine = pyridoxal 5'-phosphate + L-glutamate + phosphate + 3 H2O + H(+). Its pathway is cofactor biosynthesis; pyridoxal 5'-phosphate biosynthesis. Catalyzes the formation of pyridoxal 5'-phosphate from ribose 5-phosphate (RBP), glyceraldehyde 3-phosphate (G3P) and ammonia. The ammonia is provided by the PdxT subunit. Can also use ribulose 5-phosphate and dihydroxyacetone phosphate as substrates, resulting from enzyme-catalyzed isomerization of RBP and G3P, respectively. This Clostridium pasteurianum protein is Pyridoxal 5'-phosphate synthase subunit PdxS.